Consider the following 613-residue polypeptide: Zinc metalloproteinase-disintegrin-like MTP8 (613 aa).

The N-terminal stretch at 1–20 is a signal peptide; sequence MIEVLLVTICFTVFPYQGSP. Positions 21–191 are excised as a propeptide; sequence IILESGNVND…DETIEKISQL (171 aa). The region spanning 205 to 401 is the Peptidase M12B domain; sequence KYIELYVVVD…VRPQCILNKP (197 aa). Residue Glu-208 participates in Ca(2+) binding. An N-linked (GlcNAc...) asparagine glycan is attached at Asn-282. Asp-292 lines the Ca(2+) pocket. Disulfide bonds link Cys-316–Cys-396, Cys-356–Cys-380, and Cys-358–Cys-363. Residues His-341, His-345, and His-351 each coordinate Zn(2+). 7 residues coordinate Ca(2+): Cys-396, Asn-399, Asn-414, Phe-416, Glu-418, Glu-421, and Asp-424. Residues 409–495 form the Disintegrin domain; the sequence is PPVCGNYFVE…KCPTDSFQRN (87 aa). 15 disulfides stabilise this stretch: Cys-412–Cys-441, Cys-423–Cys-436, Cys-425–Cys-431, Cys-435–Cys-458, Cys-449–Cys-455, Cys-454–Cys-480, Cys-467–Cys-487, Cys-474–Cys-506, Cys-499–Cys-511, Cys-518–Cys-568, Cys-533–Cys-575, Cys-543–Cys-577, Cys-546–Cys-556, Cys-563–Cys-601, and Cys-595–Cys-606. A glycan (N-linked (GlcNAc...) asparagine) is linked at Asn-437. The D/ECD-tripeptide signature appears at 473–475; that stretch reads DCD. Residues Asp-475, Leu-476, Glu-478, and Asp-490 each coordinate Ca(2+). Asn-550 and Asn-572 each carry an N-linked (GlcNAc...) asparagine glycan.

Belongs to the venom metalloproteinase (M12B) family. P-III subfamily. In terms of assembly, monomer. Zn(2+) is required as a cofactor. Expressed by the venom gland.

It localises to the secreted. Snake venom zinc metalloproteinase that may impair hemostasis in the prey. The polypeptide is Zinc metalloproteinase-disintegrin-like MTP8 (Drysdalia coronoides (White-lipped snake)).